Here is a 122-residue protein sequence, read N- to C-terminus: Large ribosomal subunit protein uL14 (122 aa).

This sequence belongs to the universal ribosomal protein uL14 family. Part of the 50S ribosomal subunit. Forms a cluster with proteins L3 and L19. In the 70S ribosome, L14 and L19 interact and together make contacts with the 16S rRNA in bridges B5 and B8.

In terms of biological role, binds to 23S rRNA. Forms part of two intersubunit bridges in the 70S ribosome. This is Large ribosomal subunit protein uL14 from Micrococcus luteus (Micrococcus lysodeikticus).